Reading from the N-terminus, the 368-residue chain is uncharacterized protein (368 aa).

5 consecutive transmembrane segments (helical) span residues 22-42 (VAGI…FTLI), 74-94 (FVKP…LLVL), 104-124 (FLKT…LNLF), 144-164 (VGDF…GASL), and 168-188 (WGVN…AVSL).

The protein belongs to the MscS (TC 1.A.23) family.

The protein localises to the cell membrane. This is an uncharacterized protein from Aquifex aeolicus (strain VF5).